The sequence spans 403 residues: ESX-5 secretion system protein EccE5 (403 aa).

2 helical membrane-spanning segments follow: residues 9–29 and 43–63; these read LALSWARLTTVFVIDLLILIV and IAWWVGVGIAVLVTLLSVVTY.

It belongs to the EccE family. Part of the ESX-5 / type VII secretion system (T7SS), which is composed of cytosolic and membrane components. The ESX-5 membrane complex is composed of EccB5, EccC5, EccD5 and EccE5.

It is found in the cell inner membrane. Part of the ESX-5 specialized secretion system, which is responsible for the secretion of EsxN and a number of PE_PGRS and PPE proteins. The polypeptide is ESX-5 secretion system protein EccE5 (Mycobacterium marinum (strain ATCC BAA-535 / M)).